Reading from the N-terminus, the 222-residue chain is Phosphoribosylformylglycinamidine synthase subunit PurQ (222 aa).

One can recognise a Glutamine amidotransferase type-1 domain in the interval 2–222; it reads SVAIVRFPGT…DNLLHIAEMK (221 aa). Cys-86 acts as the Nucleophile in catalysis. Residues His-194 and Glu-196 contribute to the active site.

In terms of assembly, part of the FGAM synthase complex composed of 1 PurL, 1 PurQ and 2 PurS subunits.

Its subcellular location is the cytoplasm. It catalyses the reaction N(2)-formyl-N(1)-(5-phospho-beta-D-ribosyl)glycinamide + L-glutamine + ATP + H2O = 2-formamido-N(1)-(5-O-phospho-beta-D-ribosyl)acetamidine + L-glutamate + ADP + phosphate + H(+). The enzyme catalyses L-glutamine + H2O = L-glutamate + NH4(+). Its pathway is purine metabolism; IMP biosynthesis via de novo pathway; 5-amino-1-(5-phospho-D-ribosyl)imidazole from N(2)-formyl-N(1)-(5-phospho-D-ribosyl)glycinamide: step 1/2. Part of the phosphoribosylformylglycinamidine synthase complex involved in the purines biosynthetic pathway. Catalyzes the ATP-dependent conversion of formylglycinamide ribonucleotide (FGAR) and glutamine to yield formylglycinamidine ribonucleotide (FGAM) and glutamate. The FGAM synthase complex is composed of three subunits. PurQ produces an ammonia molecule by converting glutamine to glutamate. PurL transfers the ammonia molecule to FGAR to form FGAM in an ATP-dependent manner. PurS interacts with PurQ and PurL and is thought to assist in the transfer of the ammonia molecule from PurQ to PurL. The sequence is that of Phosphoribosylformylglycinamidine synthase subunit PurQ from Helicobacter hepaticus (strain ATCC 51449 / 3B1).